Reading from the N-terminus, the 346-residue chain is Biotin synthase (346 aa).

The region spanning 38–256 (RQVQVSTLLS…IAVARIMMPT (219 aa)) is the Radical SAM core domain. [4Fe-4S] cluster is bound by residues cysteine 53, cysteine 57, and cysteine 60. [2Fe-2S] cluster-binding residues include cysteine 97, cysteine 128, cysteine 188, and arginine 260.

Belongs to the radical SAM superfamily. Biotin synthase family. As to quaternary structure, homodimer. Requires [4Fe-4S] cluster as cofactor. [2Fe-2S] cluster serves as cofactor.

The enzyme catalyses (4R,5S)-dethiobiotin + (sulfur carrier)-SH + 2 reduced [2Fe-2S]-[ferredoxin] + 2 S-adenosyl-L-methionine = (sulfur carrier)-H + biotin + 2 5'-deoxyadenosine + 2 L-methionine + 2 oxidized [2Fe-2S]-[ferredoxin]. It participates in cofactor biosynthesis; biotin biosynthesis; biotin from 7,8-diaminononanoate: step 2/2. Functionally, catalyzes the conversion of dethiobiotin (DTB) to biotin by the insertion of a sulfur atom into dethiobiotin via a radical-based mechanism. The polypeptide is Biotin synthase (Shigella flexneri serotype 5b (strain 8401)).